Reading from the N-terminus, the 369-residue chain is Aminomethyltransferase (369 aa).

The protein belongs to the GcvT family. In terms of assembly, the glycine cleavage system is composed of four proteins: P, T, L and H.

It carries out the reaction N(6)-[(R)-S(8)-aminomethyldihydrolipoyl]-L-lysyl-[protein] + (6S)-5,6,7,8-tetrahydrofolate = N(6)-[(R)-dihydrolipoyl]-L-lysyl-[protein] + (6R)-5,10-methylene-5,6,7,8-tetrahydrofolate + NH4(+). The glycine cleavage system catalyzes the degradation of glycine. This Synechococcus sp. (strain WH7803) protein is Aminomethyltransferase.